The following is a 488-amino-acid chain: Glutamate--tRNA ligase (488 aa).

Residues 12–22 (PSPTGYMHVGN) carry the 'HIGH' region motif. Positions 109, 111, 136, and 138 each coordinate Zn(2+). The 'KMSKS' region signature appears at 253-257 (KLSKR). Lys-256 lines the ATP pocket.

This sequence belongs to the class-I aminoacyl-tRNA synthetase family. Glutamate--tRNA ligase type 1 subfamily. Monomer. It depends on Zn(2+) as a cofactor.

It localises to the cytoplasm. It carries out the reaction tRNA(Glu) + L-glutamate + ATP = L-glutamyl-tRNA(Glu) + AMP + diphosphate. Catalyzes the attachment of glutamate to tRNA(Glu) in a two-step reaction: glutamate is first activated by ATP to form Glu-AMP and then transferred to the acceptor end of tRNA(Glu). The chain is Glutamate--tRNA ligase from Clostridium tetani (strain Massachusetts / E88).